Here is a 71-residue protein sequence, read N- to C-terminus: MVLKMEIKWYVKRGFEDNLIDALNTYGSACVLGLAGMGKTTIARYIYTKLRREGVKVVYLTSDEESKTIKF.

This is an uncharacterized protein from Methanocaldococcus jannaschii (strain ATCC 43067 / DSM 2661 / JAL-1 / JCM 10045 / NBRC 100440) (Methanococcus jannaschii).